Consider the following 495-residue polypeptide: Keratin, type II cuticular 87 (495 aa).

A head region spans residues 1–111 (MSCFSSRLGA…PNAQCVKHEE (111 aa)). Residues 111–422 (EKEQIKCLNS…RLLEGEEQRL (312 aa)) form the IF rod domain. The tract at residues 112-146 (KEQIKCLNSKFAAFIDKVRFLEQQNKLLETKWQFY) is coil 1A. Residues 147-156 (QNRKCCESNM) are linker 1. The coil 1B stretch occupies residues 157 to 257 (EPLFEGYIEA…YEEETRLLHS (101 aa)). Residues 258 to 274 (HISDTSVVVKMDNSRDL) form a linker 12 region. Residues 275–418 (NMDCVVAEIK…ITYRRLLEGE (144 aa)) form a coil 2 region. The segment at 419–494 (EQRLCEGVGS…TCGSSRSVRF (76 aa)) is tail.

This sequence belongs to the intermediate filament family. Heterotetramer of two type I and two type II keratins.

This is Keratin, type II cuticular 87 from Mus musculus (Mouse).